Consider the following 513-residue polypeptide: MEISWGRALWRNFLGQSPDWYKLALIIFLILNPLIFIISPFVAGWLLVAEFIFTLAMALKCYPLLPGGLLAIEAVFIGMTSAEHVREEVAANLEVLLLLMFMVAGIYFMKQLLLFIFTRLLLSIRSKMLLSLSFCMAAAFLSAFLDALTVVAVVISVAVGFYGIYHRVASSRTEDTDLQDDSHIDKHYKVVLEQFRGFLRSLMMHAGVGTALGGVMTMVGEPQNLIIAKAAGWHFGDFFLRMSPVTVPVLICGLLTCLLVEKLRCFGYGETLPEKVREVLQQFDDQSRHQRTRQDKIRLIVQAIIGVWLVTALALHLAEVGLIGLSVIILATSLTGVTDEHAIGKAFTESLPFTALLTVFFSVVAVIIDQQLFSPIIHFVLQASEHAQLSLFYIFNGLLSSISDNVFVGTIYINEAKAAMESGAITLKQYELLAVAINTGTNLPSVATPNGQAAFLFLLTSALAPLIRLSYGRMVWMALPYTLVLTLVGLLCVEFTLAPVTEWFMQMGWIATL.

11 helical membrane passes run 23 to 43 (LALIIFLILNPLIFIISPFVA), 52 to 72 (IFTLAMALKCYPLLPGGLLAI), 97 to 117 (LLLMFMVAGIYFMKQLLLFIF), 144 to 164 (FLDALTVVAVVISVAVGFYGI), 202 to 222 (LMMHAGVGTALGGVMTMVGEP), 238 to 258 (FFLRMSPVTVPVLICGLLTCL), 303 to 323 (AIIGVWLVTALALHLAEVGLI), 348 to 368 (TESLPFTALLTVFFSVVAVII), 391 to 411 (LFYIFNGLLSSISDNVFVGTI), 447 to 467 (ATPNGQAAFLFLLTSALAPLI), and 475 to 495 (VWMALPYTLVLTLVGLLCVEF).

It belongs to the NhaB Na(+)/H(+) (TC 2.A.34) antiporter family.

Its subcellular location is the cell inner membrane. It carries out the reaction 2 Na(+)(in) + 3 H(+)(out) = 2 Na(+)(out) + 3 H(+)(in). Na(+)/H(+) antiporter that extrudes sodium in exchange for external protons. This is Na(+)/H(+) antiporter NhaB from Escherichia coli (strain SMS-3-5 / SECEC).